We begin with the raw amino-acid sequence, 502 residues long: Glycerol kinase (502 aa).

Position 13 (threonine 13) interacts with ADP. The ATP site is built by threonine 13, threonine 14, and serine 15. Threonine 13 contacts sn-glycerol 3-phosphate. Arginine 17 is an ADP binding site. Sn-glycerol 3-phosphate-binding residues include arginine 83, glutamate 84, tyrosine 135, and aspartate 245. 5 residues coordinate glycerol: arginine 83, glutamate 84, tyrosine 135, aspartate 245, and glutamine 246. Positions 267 and 310 each coordinate ADP. ATP is bound by residues threonine 267, glycine 310, glutamine 314, and glycine 411. Residues glycine 411 and asparagine 415 each coordinate ADP.

The protein belongs to the FGGY kinase family. In terms of assembly, homotetramer and homodimer (in equilibrium).

The catalysed reaction is glycerol + ATP = sn-glycerol 3-phosphate + ADP + H(+). The protein operates within polyol metabolism; glycerol degradation via glycerol kinase pathway; sn-glycerol 3-phosphate from glycerol: step 1/1. Its activity is regulated as follows. Activated by phosphorylation and inhibited by fructose 1,6-bisphosphate (FBP). In terms of biological role, key enzyme in the regulation of glycerol uptake and metabolism. Catalyzes the phosphorylation of glycerol to yield sn-glycerol 3-phosphate. This chain is Glycerol kinase, found in Lactobacillus delbrueckii subsp. bulgaricus (strain ATCC BAA-365 / Lb-18).